Consider the following 106-residue polypeptide: Met repressor (106 aa).

Belongs to the MetJ family. In terms of assembly, homodimer.

Its subcellular location is the cytoplasm. In terms of biological role, this regulatory protein, when combined with SAM (S-adenosylmethionine) represses the expression of the methionine regulon and of enzymes involved in SAM synthesis. This chain is Met repressor, found in Vibrio atlanticus (strain LGP32) (Vibrio splendidus (strain Mel32)).